The following is a 172-amino-acid chain: Large ribosomal subunit protein uL10 (172 aa).

The protein belongs to the universal ribosomal protein uL10 family. In terms of assembly, part of the ribosomal stalk of the 50S ribosomal subunit. The N-terminus interacts with L11 and the large rRNA to form the base of the stalk. The C-terminus forms an elongated spine to which L12 dimers bind in a sequential fashion forming a multimeric L10(L12)X complex.

Forms part of the ribosomal stalk, playing a central role in the interaction of the ribosome with GTP-bound translation factors. In Nitrobacter winogradskyi (strain ATCC 25391 / DSM 10237 / CIP 104748 / NCIMB 11846 / Nb-255), this protein is Large ribosomal subunit protein uL10.